The following is a 181-amino-acid chain: Protein canopy homolog 1 (181 aa).

A signal peptide spans 1 to 21 (MAILLHFGVLITAFLSSHVEG). A Saposin B-type domain is found at 25 to 177 (PILYCGACRA…EETGLCKEYL (153 aa)). 3 cysteine pairs are disulfide-bonded: cysteine 29–cysteine 173, cysteine 32–cysteine 166, and cysteine 87–cysteine 139. The Prevents secretion from ER signature appears at 178-181 (HNEL).

Belongs to the canopy family.

Its subcellular location is the endoplasmic reticulum. Plays an role in early embryonic development. This is Protein canopy homolog 1 (cnpy1) from Xenopus laevis (African clawed frog).